Reading from the N-terminus, the 390-residue chain is Elongation factor Tu 2 (390 aa).

Residues 10–201 enclose the tr-type G domain; the sequence is KPHVNVGTIG…LDEYVAVPPR (192 aa). A G1 region spans residues 19–26; the sequence is GHVDHGKT. A GTP-binding site is contributed by 19–26; the sequence is GHVDHGKT. Threonine 26 contributes to the Mg(2+) binding site. Positions 55-59 are G2; it reads GITIA. Residues 76–79 form a G3 region; sequence DCPG. GTP-binding positions include 76–80 and 131–134; these read DCPGH and NKAD. Positions 131–134 are G4; it reads NKAD. A G5 region spans residues 168-170; that stretch reads SAL.

The protein belongs to the TRAFAC class translation factor GTPase superfamily. Classic translation factor GTPase family. EF-Tu/EF-1A subfamily. As to quaternary structure, monomer.

The protein resides in the cytoplasm. The catalysed reaction is GTP + H2O = GDP + phosphate + H(+). Its function is as follows. GTP hydrolase that promotes the GTP-dependent binding of aminoacyl-tRNA to the A-site of ribosomes during protein biosynthesis. In Wolbachia pipientis wMel, this protein is Elongation factor Tu 2.